A 357-amino-acid polypeptide reads, in one-letter code: N-methyltransferase dtpB (357 aa).

Belongs to the methyltransferase superfamily.

The protein operates within alkaloid biosynthesis. Functionally, N-methyltransferase; part of the gene cluster that mediates the biosynthesis of the dimeric diketopiperazine alkaloid ditryptophenaline. The nonribosomal peptide synthase dtpA accepts L-tryptophan and L-phenylalanine as its substrates and forms the phenylalanyl-tryptophanyl cyclic dipeptide product cyclophenylalanyltryptophenyl. The N-methyltransferase dtpB is responsible for the N-methylation of cyclophenylalanyltryptophenyl to yield cyclo-N-methylphenylalanyltryptophenyl. The cytochrome P450 monooxygenase is responsible not only for pyrroloindole ring formation but also for concurrent dimerization of N-methylphenylalanyltryptophanyl diketopiperazine monomers into a homodimeric product. In Aspergillus flavus (strain ATCC 200026 / FGSC A1120 / IAM 13836 / NRRL 3357 / JCM 12722 / SRRC 167), this protein is N-methyltransferase dtpB.